Consider the following 75-residue polypeptide: Tautomerase PptA (75 aa).

Pro2 serves as the catalytic Proton acceptor; via imino nitrogen.

Belongs to the 4-oxalocrotonate tautomerase family. PptA subfamily. As to quaternary structure, homodimer.

Its subcellular location is the cytoplasm. The polypeptide is Tautomerase PptA (Escherichia coli (strain SMS-3-5 / SECEC)).